We begin with the raw amino-acid sequence, 273 residues long: DnaJ homolog subfamily C member 27 (273 aa).

GTP-binding positions include 23 to 30, 71 to 75, and 134 to 137; these read GNAEVGKS, DMAGH, and NKID. The J domain maps to 217-273; sequence DSWDMLGVKPGATRDEVNKAYRKLAVLLHPDKCVAPGSEDAFKAVVNARTALLKNIK.

Belongs to the small GTPase superfamily. Rab family.

Its subcellular location is the nucleus. Functionally, GTPase possibly involved in regulation of the MEK/ERK pathway. This chain is DnaJ homolog subfamily C member 27 (DNAJC27), found in Gallus gallus (Chicken).